The chain runs to 145 residues: D-aminoacyl-tRNA deacylase (145 aa).

The Gly-cisPro motif, important for rejection of L-amino acids motif lies at 137 to 138 (GP).

The protein belongs to the DTD family. Homodimer.

Its subcellular location is the cytoplasm. It carries out the reaction glycyl-tRNA(Ala) + H2O = tRNA(Ala) + glycine + H(+). It catalyses the reaction a D-aminoacyl-tRNA + H2O = a tRNA + a D-alpha-amino acid + H(+). An aminoacyl-tRNA editing enzyme that deacylates mischarged D-aminoacyl-tRNAs. Also deacylates mischarged glycyl-tRNA(Ala), protecting cells against glycine mischarging by AlaRS. Acts via tRNA-based rather than protein-based catalysis; rejects L-amino acids rather than detecting D-amino acids in the active site. By recycling D-aminoacyl-tRNA to D-amino acids and free tRNA molecules, this enzyme counteracts the toxicity associated with the formation of D-aminoacyl-tRNA entities in vivo and helps enforce protein L-homochirality. This Psychromonas ingrahamii (strain DSM 17664 / CCUG 51855 / 37) protein is D-aminoacyl-tRNA deacylase.